The primary structure comprises 132 residues: Ubiquinol-cytochrome c reductase complex assembly factor 4 (132 aa).

A signal peptide spans 1–15 (MNRVLCAPAAGAVRA). Residues 16–78 (LRLIGWASRS…GKGHQRPWWK (63 aa)) lie on the Mitochondrial matrix side of the membrane. The disordered stretch occupies residues 29–72 (LPGSRDRAHPAAEEEDDPDRPIEFSSSKANPHRWSVGHTMGKGH). A helical transmembrane segment spans residues 79-95 (VLPLSCFLVALIIWCYL). Topologically, residues 96–132 (REESEADQWLRQVWGEVPEPSDRSEEPETPAAYRART) are mitochondrial intermembrane. Positions 110–132 (GEVPEPSDRSEEPETPAAYRART) are disordered.

This sequence belongs to the UQCC4 family. In terms of assembly, forms a complex, named COMB/coordinator of mitochondrial CYTB biogenesis, composed of UQCC1, UQCC2, UQCC4, UQCC5 and UQCC6; stabilizes nascent cytochrome b/MT-CYB and promotes its membrane insertion. Forms a complex, named COMA, composed of UQCC1, UQCC2 and UQCC4; activates MT-CYB translation. Forms a complex, named COMC, composed of UQCC1, UQCC2; UQCC3 and UQCC4; mediates MT-CYB hemylation and association with the first nuclear-encoded complex III subunit UQCRQ. Complexes COMA and COMB are bound to the mitochondrion inner membrane by UQCC4.

Its subcellular location is the mitochondrion inner membrane. Functionally, required for the assembly and stability of the mitochondrial ubiquinol-cytochrome c reductase complex (complex III (CIII) or cytochrome b-c1 complex), a multisubunit transmembrane complex that is part of the mitochondrial electron transport chain (ETC) which drives oxidative phosphorylation. The sequence is that of Ubiquinol-cytochrome c reductase complex assembly factor 4 from Homo sapiens (Human).